A 466-amino-acid chain; its full sequence is Ribulose bisphosphate carboxylase large chain (466 aa).

Position 4 is an N6,N6,N6-trimethyllysine (Lys-4). Substrate-binding residues include Asn-113 and Thr-163. Lys-165 acts as the Proton acceptor in catalysis. Substrate is bound at residue Lys-167. Positions 191, 193, and 194 each coordinate Mg(2+). Position 191 is an N6-carboxylysine (Lys-191). The Proton acceptor role is filled by His-284. Arg-285, His-317, and Ser-369 together coordinate substrate.

The protein belongs to the RuBisCO large chain family. Type I subfamily. In terms of assembly, heterohexadecamer of 8 large chains and 8 small chains; disulfide-linked. The disulfide link is formed within the large subunit homodimers. It depends on Mg(2+) as a cofactor. Post-translationally, the disulfide bond which can form in the large chain dimeric partners within the hexadecamer appears to be associated with oxidative stress and protein turnover.

The protein localises to the plastid. The protein resides in the chloroplast. The catalysed reaction is 2 (2R)-3-phosphoglycerate + 2 H(+) = D-ribulose 1,5-bisphosphate + CO2 + H2O. It catalyses the reaction D-ribulose 1,5-bisphosphate + O2 = 2-phosphoglycolate + (2R)-3-phosphoglycerate + 2 H(+). Functionally, ruBisCO catalyzes two reactions: the carboxylation of D-ribulose 1,5-bisphosphate, the primary event in carbon dioxide fixation, as well as the oxidative fragmentation of the pentose substrate in the photorespiration process. Both reactions occur simultaneously and in competition at the same active site. The polypeptide is Ribulose bisphosphate carboxylase large chain (Drimys winteri (Winter's bark)).